Consider the following 458-residue polypeptide: 3-isopropylmalate dehydratase large subunit (458 aa).

[4Fe-4S] cluster is bound by residues Cys339, Cys399, and Cys402.

Belongs to the aconitase/IPM isomerase family. LeuC type 1 subfamily. In terms of assembly, heterodimer of LeuC and LeuD. It depends on [4Fe-4S] cluster as a cofactor.

It catalyses the reaction (2R,3S)-3-isopropylmalate = (2S)-2-isopropylmalate. It participates in amino-acid biosynthesis; L-leucine biosynthesis; L-leucine from 3-methyl-2-oxobutanoate: step 2/4. Catalyzes the isomerization between 2-isopropylmalate and 3-isopropylmalate, via the formation of 2-isopropylmaleate. This Lactococcus lactis subsp. cremoris (strain MG1363) protein is 3-isopropylmalate dehydratase large subunit.